Here is a 297-residue protein sequence, read N- to C-terminus: Acetyl-coenzyme A carboxylase carboxyl transferase subunit beta (297 aa).

The disordered stretch occupies residues 1-23 (MSWIERILGRTSSSSSSSKSKVP). Positions 26-295 (VWTKCTSCEQ…PFKTAELIVE (270 aa)) constitute a CoA carboxyltransferase N-terminal domain. Zn(2+) contacts are provided by Cys-30, Cys-33, Cys-49, and Cys-52. The C4-type zinc-finger motif lies at 30 to 52 (CTSCEQVLYSEELKRNMHVCPKC).

The protein belongs to the AccD/PCCB family. Acetyl-CoA carboxylase is a heterohexamer composed of biotin carboxyl carrier protein (AccB), biotin carboxylase (AccC) and two subunits each of ACCase subunit alpha (AccA) and ACCase subunit beta (AccD). Zn(2+) serves as cofactor.

The protein resides in the cytoplasm. The catalysed reaction is N(6)-carboxybiotinyl-L-lysyl-[protein] + acetyl-CoA = N(6)-biotinyl-L-lysyl-[protein] + malonyl-CoA. It participates in lipid metabolism; malonyl-CoA biosynthesis; malonyl-CoA from acetyl-CoA: step 1/1. In terms of biological role, component of the acetyl coenzyme A carboxylase (ACC) complex. Biotin carboxylase (BC) catalyzes the carboxylation of biotin on its carrier protein (BCCP) and then the CO(2) group is transferred by the transcarboxylase to acetyl-CoA to form malonyl-CoA. The protein is Acetyl-coenzyme A carboxylase carboxyl transferase subunit beta of Actinobacillus pleuropneumoniae serotype 7 (strain AP76).